The chain runs to 341 residues: Cytoplasmic tRNA 2-thiolation protein 1 (341 aa).

This sequence belongs to the TtcA family. CTU1/NCS6/ATPBD3 subfamily.

The protein localises to the cytoplasm. It functions in the pathway tRNA modification; 5-methoxycarbonylmethyl-2-thiouridine-tRNA biosynthesis. Functionally, plays a central role in 2-thiolation of mcm(5)S(2)U at tRNA wobble positions of tRNA(Lys), tRNA(Glu) and tRNA(Gln). Directly binds tRNAs and probably acts by catalyzing adenylation of tRNAs, an intermediate required for 2-thiolation. It is unclear whether it acts as a sulfurtransferase that transfers sulfur from thiocarboxylated URM1 onto the uridine of tRNAs at wobble position. In Aedes aegypti (Yellowfever mosquito), this protein is Cytoplasmic tRNA 2-thiolation protein 1.